Reading from the N-terminus, the 84-residue chain is Small ribosomal subunit protein bS20 (84 aa).

Belongs to the bacterial ribosomal protein bS20 family.

In terms of biological role, binds directly to 16S ribosomal RNA. The sequence is that of Small ribosomal subunit protein bS20 from Lacticaseibacillus casei (strain BL23) (Lactobacillus casei).